Consider the following 150-residue polypeptide: Large ribosomal subunit protein bL9 (150 aa).

This sequence belongs to the bacterial ribosomal protein bL9 family.

Binds to the 23S rRNA. The polypeptide is Large ribosomal subunit protein bL9 (Lactococcus lactis subsp. cremoris (strain MG1363)).